We begin with the raw amino-acid sequence, 272 residues long: 4-hydroxy-tetrahydrodipicolinate reductase (272 aa).

NAD(+) contacts are provided by residues 11–16 and Glu37; that span reads GVSGRM. Residue Arg38 coordinates NADP(+). NAD(+) is bound by residues 101–103 and 125–128; these read GTT and AGNM. Residue His158 is the Proton donor/acceptor of the active site. His159 contacts (S)-2,3,4,5-tetrahydrodipicolinate. The active-site Proton donor is the Lys162. A (S)-2,3,4,5-tetrahydrodipicolinate-binding site is contributed by 168 to 169; sequence GT.

Belongs to the DapB family.

The protein localises to the cytoplasm. It carries out the reaction (S)-2,3,4,5-tetrahydrodipicolinate + NAD(+) + H2O = (2S,4S)-4-hydroxy-2,3,4,5-tetrahydrodipicolinate + NADH + H(+). It catalyses the reaction (S)-2,3,4,5-tetrahydrodipicolinate + NADP(+) + H2O = (2S,4S)-4-hydroxy-2,3,4,5-tetrahydrodipicolinate + NADPH + H(+). Its pathway is amino-acid biosynthesis; L-lysine biosynthesis via DAP pathway; (S)-tetrahydrodipicolinate from L-aspartate: step 4/4. Functionally, catalyzes the conversion of 4-hydroxy-tetrahydrodipicolinate (HTPA) to tetrahydrodipicolinate. This is 4-hydroxy-tetrahydrodipicolinate reductase from Roseobacter denitrificans (strain ATCC 33942 / OCh 114) (Erythrobacter sp. (strain OCh 114)).